The sequence spans 491 residues: Polybrominated aromatic compounds synthase (491 aa).

Cysteine 437 provides a ligand contact to heme.

This sequence belongs to the cytochrome P450 family. The cofactor is heme.

In terms of biological role, cytochrome P450 protein involved in the biosynthesis of polybrominated aromatic organic compounds. In the presence of ferredoxin, ferredoxin reductase and NADH, catalyzes the coupling of bromophenols and bromopyrroles, forming various polybrominated biphenyls and hydroxylated polybrominated diphenyl ethers (OH-BDE). Can also mediate the heterocoupling of 3,5-dibromocatechol. Can also use chlorinated phenolic substrates. 2,3,4-tribromopyrrole could be the physiological substrate. This Pseudoalteromonas luteoviolacea (strain 2ta16) protein is Polybrominated aromatic compounds synthase.